A 467-amino-acid chain; its full sequence is Polygalacturonase (467 aa).

Residues 1-27 (MALQRRFFQFVIITLLIPSFILGYTSA) form the signal peptide. The Proton donor role is filled by Asp283. A glycan (N-linked (GlcNAc...) asparagine) is linked at Asn290. Residue His306 is part of the active site.

Belongs to the glycosyl hydrolase 28 family.

The protein localises to the secreted. Its subcellular location is the cell wall. The enzyme catalyses (1,4-alpha-D-galacturonosyl)n+m + H2O = (1,4-alpha-D-galacturonosyl)n + (1,4-alpha-D-galacturonosyl)m.. Acts in concert with the pectinesterase, in the ripening process. Is involved in cell wall metabolism, specifically in polyuronide degradation. The polypeptide is Polygalacturonase (Actinidia deliciosa (Kiwi)).